The primary structure comprises 275 residues: Tryptophan synthase alpha chain (275 aa).

Active-site proton acceptor residues include glutamate 49 and aspartate 60.

Belongs to the TrpA family. As to quaternary structure, tetramer of two alpha and two beta chains.

It catalyses the reaction (1S,2R)-1-C-(indol-3-yl)glycerol 3-phosphate + L-serine = D-glyceraldehyde 3-phosphate + L-tryptophan + H2O. It functions in the pathway amino-acid biosynthesis; L-tryptophan biosynthesis; L-tryptophan from chorismate: step 5/5. Its function is as follows. The alpha subunit is responsible for the aldol cleavage of indoleglycerol phosphate to indole and glyceraldehyde 3-phosphate. This chain is Tryptophan synthase alpha chain, found in Psychrobacter sp. (strain PRwf-1).